The chain runs to 273 residues: Zinc finger protein AZF2 (273 aa).

The disordered stretch occupies residues 33–64 (LKRKRSKRQRSHSPSSSSSSPPRSRPKSQNQD). Basic residues predominate over residues 34–43 (KRKRSKRQRS). Residues 44 to 54 (HSPSSSSSSPP) show a composition bias toward low complexity. C2H2-type zinc fingers lie at residues 106 to 128 (YKCN…KASH) and 165 to 187 (HECS…KRCH). Residues 195–215 (GGGGGSKSISHSGSVSSTVSE) form a disordered region. A compositionally biased stretch (low complexity) spans 201–213 (KSISHSGSVSSTV).

In terms of tissue distribution, expressed in roots, radicles, cotyledons, hypocotyls, leaf veins, stems, sepals, petals, stamens, placenta, funiculi and maturated seeds.

Its subcellular location is the nucleus. In terms of biological role, transcriptional repressor involved in the inhibition of plant growth under abiotic stress conditions. Can repress the expression of various genes, including osmotic stress and abscisic acid-repressive genes and auxin-inducible genes, by binding to their promoter regions in a DNA sequence-specific manner. Acts as a negative regulator of abscisic acid (ABA) signaling during seed germination. Probably involved in jasmonate (JA) early signaling response. May regulate the expression of the JA biosynthesis gene LOX3 and control the expression of TIFY10A/JAZ1, a key repressor in the JA signaling cascade. May act as a positive regulator of leaf senescence. Has been identified as a suppressor of the deficiency of yeast snf4 mutant to grow on non-fermentable carbon source. The protein is Zinc finger protein AZF2 (AZF2) of Arabidopsis thaliana (Mouse-ear cress).